A 410-amino-acid chain; its full sequence is Protein CNPPD1 (410 aa).

A helical membrane pass occupies residues 233-253; it reads CLLAVAYVSSVALAVASVAVI.

It belongs to the CNPPD1 family.

It localises to the membrane. This is Protein CNPPD1 (CNPPD1) from Homo sapiens (Human).